Reading from the N-terminus, the 882-residue chain is Alanine--tRNA ligase (882 aa).

The Zn(2+) site is built by His-568, His-572, Cys-670, and His-674.

The protein belongs to the class-II aminoacyl-tRNA synthetase family. Zn(2+) serves as cofactor.

Its subcellular location is the cytoplasm. It catalyses the reaction tRNA(Ala) + L-alanine + ATP = L-alanyl-tRNA(Ala) + AMP + diphosphate. Its function is as follows. Catalyzes the attachment of alanine to tRNA(Ala) in a two-step reaction: alanine is first activated by ATP to form Ala-AMP and then transferred to the acceptor end of tRNA(Ala). Also edits incorrectly charged Ser-tRNA(Ala) and Gly-tRNA(Ala) via its editing domain. In Lactobacillus gasseri (strain ATCC 33323 / DSM 20243 / BCRC 14619 / CIP 102991 / JCM 1131 / KCTC 3163 / NCIMB 11718 / NCTC 13722 / AM63), this protein is Alanine--tRNA ligase.